Consider the following 90-residue polypeptide: Small ribosomal subunit protein uS15c (90 aa).

The protein belongs to the universal ribosomal protein uS15 family. As to quaternary structure, part of the 30S ribosomal subunit.

Its subcellular location is the plastid. The protein localises to the chloroplast. The chain is Small ribosomal subunit protein uS15c (rps15) from Liriodendron tulipifera (Tuliptree).